The primary structure comprises 98 residues: Large ribosomal subunit protein uL23 (98 aa).

It belongs to the universal ribosomal protein uL23 family. Part of the 50S ribosomal subunit. Contacts protein L29, and trigger factor when it is bound to the ribosome.

Functionally, one of the early assembly proteins it binds 23S rRNA. One of the proteins that surrounds the polypeptide exit tunnel on the outside of the ribosome. Forms the main docking site for trigger factor binding to the ribosome. The polypeptide is Large ribosomal subunit protein uL23 (Methylobacterium radiotolerans (strain ATCC 27329 / DSM 1819 / JCM 2831 / NBRC 15690 / NCIMB 10815 / 0-1)).